The following is a 467-amino-acid chain: Uronate isomerase (467 aa).

It belongs to the metallo-dependent hydrolases superfamily. Uronate isomerase family.

It carries out the reaction D-glucuronate = D-fructuronate. The catalysed reaction is aldehydo-D-galacturonate = keto-D-tagaturonate. It functions in the pathway carbohydrate metabolism; pentose and glucuronate interconversion. This Haemophilus influenzae (strain 86-028NP) protein is Uronate isomerase.